A 427-amino-acid polypeptide reads, in one-letter code: Ceramide Synthase FUM18 (427 aa).

Asn20 is a glycosylation site (N-linked (GlcNAc...) asparagine). A run of 6 helical transmembrane segments spans residues 38–58 (ILPLLTGFTLLAGVILLIHIS), 131–151 (EQGWILMYYSVFWPLGMLIWA), 173–193 (GLIKFYILTQLAYWIQQVISV), 202–222 (YWLNVVHHFITITLILLCYVY), 250–270 (YLGFTTLCDLVFFLFFVTWIV), and 335–355 (VSILAYLLLLQVLMMIWFGFI). One can recognise a TLC domain in the interval 124–364 (RKVVRFSEQG…ICKVAIGVLD (241 aa)). Positions 373–406 (SDVESDEEDSEPVANGSGWQQSQLQPGRRVGSNG) are disordered. N-linked (GlcNAc...) asparagine glycosylation is present at Asn387.

This sequence belongs to the sphingosine N-acyltransferase family.

It localises to the endoplasmic reticulum membrane. It functions in the pathway mycotoxin biosynthesis. Its function is as follows. Ceramide synthase; part of the gene cluster that mediates the biosynthesis of fumonisins B1 (FB1), B2 (FB2), B3 (FB3), and B4 (FB4), which are carcinogenic mycotoxins. Plays a role in self-protection from FB1 toxicity by contributing to ceramide synthesis. The biosynthesis starts with the FUM1-catalyzed carbon chain assembly from one molecule of acetyl-CoA, eight molecules of malonyl-CoA, and two molecules of methionine (in S-adenosyl form). The C18 polyketide chain is released from the enzyme by a nucleophilic attack of a carbanion, which is derived from R-carbon of alanine by decarboxylation, on the carbonyl carbon of polyketide acyl chain. This step is catalyzed by the pyridoxal 5'-phosphate-dependent aminoacyl transferase FUM8. The resultant 3-keto intermediate is then stereospecifically reduced to a 3-hydroxyl product by reductase FUM13. Subsequent oxidations at C-10 by the cytochrome P450 monooxygenase FUM2, C-14 and C-15 by FUM6, FUM12 or FUM15, tricarballylic esterification of the hydroxyl groups on C-14 and C-15 by acyltransferase FUM14, and C-5 hydroxylation by 2-keto-glutarate-dependent dioxygenase FUM3 furnish the biosynthesis of fumonisins. The tricarballylic moieties are most likely derived from the citric acid cycle, and their addition to the carbon backbone may involve FUM7, FUM10, FUM11 and FUM14. The polypeptide is Ceramide Synthase FUM18 (Gibberella moniliformis (strain M3125 / FGSC 7600) (Maize ear and stalk rot fungus)).